The following is a 204-amino-acid chain: MGSRDHLFKVLVVGDAAVGKTSLVQRYSQDSFSKHYKSTVGVDFALKVLQWSDSEMVRLQLWDIAGQERFTSMTRLYYRDASACVIMFDVTNATTFSNSQRWKQDLDSKLTLPSGEPVPCLLLANKSDLSPWAVSRDQIDRFSKENGFTGWTETSVKENKNINEAMRVLVEKMMNNSREDIMSSSTQGNYINLQTKPSPGWTCC.

Positions 33, 34, 35, 36, 37, and 39 each coordinate GTP. The Effector region motif lies at tyrosine 36 to phenylalanine 44. Threonine 71 carries the post-translational modification Phosphothreonine; by LRRK2. Serine 72 is subject to Phosphoserine. The GTP site is built by lysine 126, valine 156, and lysine 157. S-geranylgeranyl cysteine attachment occurs at residues cysteine 203 and cysteine 204.

The protein belongs to the small GTPase superfamily. Rab family. In terms of assembly, interacts with LRRK2 (via the N-terminus); this interaction is direct and stimulates kinase activity. Expressed predominantly in kidney and much less in brain, heart, muscle, fat, liver, spleen, adrenal gland, ovary, thymus and lung. Not expressed in testis and intestine.

The protein resides in the cell membrane. The protein localises to the cytoplasm. It localises to the perinuclear region. It is found in the golgi apparatus. Its subcellular location is the golgi apparatus membrane. The protein resides in the trans-Golgi network. The protein localises to the cytoskeleton. Functionally, the small GTPases Rab are key regulators in vesicle trafficking. Essential for maintaining the integrity of endosome-trans-Golgi network structure. Together with LRRK2, plays a role in the retrograde trafficking pathway for recycling proteins, such as mannose 6 phosphate receptor (M6PR), between lysosomes and the Golgi apparatus in a retromer-dependent manner. Recruits LRRK2 to the Golgi apparatus and stimulates LRRK2 kinase activity. Stimulates phosphorylation of RAB10 'Thr-73' by LRRK2. Regulates also neuronal process morphology in the intact central nervous system (CNS). In Rattus norvegicus (Rat), this protein is Ras-related protein Rab-7L1 (Rab29).